A 531-amino-acid polypeptide reads, in one-letter code: Zinc finger protein 703-B (531 aa).

Residues 1-10 (MNCSPPGSCT) are compositionally biased toward polar residues. Disordered stretches follow at residues 1–28 (MNCS…ATLA), 88–249 (SQIG…VAPI), and 295–318 (VGNQ…LTGA). Composition is skewed to low complexity over residues 19-28 (TPATPCATLA) and 113-122 (RSSSLKLGES). Over residues 171–180 (SPSSRVSSPG) the composition is skewed to polar residues. Positions 183-198 (CESKNNESQEKKEPEV) are enriched in basic and acidic residues. Over residues 199 to 215 (NKSSLETSQANPTLTRA) the composition is skewed to polar residues. Over residues 216–227 (SISNSSAESSQS) the composition is skewed to low complexity. The C2H2-type zinc-finger motif lies at 404 to 432 (HICNWVSASGPCDKRFATSEELLAHLRTH).

It belongs to the Elbow/Noc family.

It is found in the nucleus. The protein localises to the cytoplasm. Its function is as follows. Transcriptional corepressor which does not bind directly to DNA and may regulate transcription through recruitment of histone deacetylases to gene promoters. Regulates cell adhesion, migration and proliferation. Involved in specification of the lateral neural plate border (NPB). May be required for segmental gene expression during hindbrain development. This Xenopus laevis (African clawed frog) protein is Zinc finger protein 703-B (znf703-b).